The primary structure comprises 440 residues: F-box protein pof12 (440 aa).

Residues 8–54 form the F-box domain; that stretch reads KNPASIFSHETLLHVLNDLSAHDLAALERVSRSWNSIVRRSSVWHNL.

As to quaternary structure, interacts with skp1.

Its subcellular location is the nucleus. The sequence is that of F-box protein pof12 (pof12) from Schizosaccharomyces pombe (strain 972 / ATCC 24843) (Fission yeast).